Reading from the N-terminus, the 371-residue chain is UDP-N-acetylglucosamine--N-acetylmuramyl-(pentapeptide) pyrophosphoryl-undecaprenol N-acetylglucosamine transferase (371 aa).

Residues 10 to 12 (TGG), Asn-124, Arg-165, Ser-197, Ile-251, and Gln-296 contribute to the UDP-N-acetyl-alpha-D-glucosamine site.

This sequence belongs to the glycosyltransferase 28 family. MurG subfamily.

The protein resides in the cell membrane. It carries out the reaction di-trans,octa-cis-undecaprenyl diphospho-N-acetyl-alpha-D-muramoyl-L-alanyl-D-glutamyl-meso-2,6-diaminopimeloyl-D-alanyl-D-alanine + UDP-N-acetyl-alpha-D-glucosamine = di-trans,octa-cis-undecaprenyl diphospho-[N-acetyl-alpha-D-glucosaminyl-(1-&gt;4)]-N-acetyl-alpha-D-muramoyl-L-alanyl-D-glutamyl-meso-2,6-diaminopimeloyl-D-alanyl-D-alanine + UDP + H(+). Its pathway is cell wall biogenesis; peptidoglycan biosynthesis. Its function is as follows. Cell wall formation. Catalyzes the transfer of a GlcNAc subunit on undecaprenyl-pyrophosphoryl-MurNAc-pentapeptide (lipid intermediate I) to form undecaprenyl-pyrophosphoryl-MurNAc-(pentapeptide)GlcNAc (lipid intermediate II). This chain is UDP-N-acetylglucosamine--N-acetylmuramyl-(pentapeptide) pyrophosphoryl-undecaprenol N-acetylglucosamine transferase, found in Carboxydothermus hydrogenoformans (strain ATCC BAA-161 / DSM 6008 / Z-2901).